The primary structure comprises 298 residues: Acetylglutamate kinase (298 aa).

Substrate contacts are provided by residues 69-70, arginine 91, and asparagine 196; that span reads GG.

The protein belongs to the acetylglutamate kinase family. ArgB subfamily.

It is found in the cytoplasm. It carries out the reaction N-acetyl-L-glutamate + ATP = N-acetyl-L-glutamyl 5-phosphate + ADP. It functions in the pathway amino-acid biosynthesis; L-arginine biosynthesis; N(2)-acetyl-L-ornithine from L-glutamate: step 2/4. Catalyzes the ATP-dependent phosphorylation of N-acetyl-L-glutamate. This is Acetylglutamate kinase from Rhodopseudomonas palustris (strain ATCC BAA-98 / CGA009).